The primary structure comprises 486 residues: ATP synthase subunit beta 2 (486 aa).

166–173 (GGAGVGKT) contributes to the ATP binding site.

It belongs to the ATPase alpha/beta chains family. In terms of assembly, F-type ATPases have 2 components, CF(1) - the catalytic core - and CF(0) - the membrane proton channel. CF(1) has five subunits: alpha(3), beta(3), gamma(1), delta(1), epsilon(1). CF(0) has three main subunits: a(1), b(2) and c(9-12). The alpha and beta chains form an alternating ring which encloses part of the gamma chain. CF(1) is attached to CF(0) by a central stalk formed by the gamma and epsilon chains, while a peripheral stalk is formed by the delta and b chains.

It localises to the cell inner membrane. The enzyme catalyses ATP + H2O + 4 H(+)(in) = ADP + phosphate + 5 H(+)(out). Produces ATP from ADP in the presence of a proton gradient across the membrane. The catalytic sites are hosted primarily by the beta subunits. The polypeptide is ATP synthase subunit beta 2 (Gluconobacter oxydans (strain 621H) (Gluconobacter suboxydans)).